A 234-amino-acid polypeptide reads, in one-letter code: Immune-associated nucleotide-binding protein 2 (234 aa).

Residues 21–223 enclose the AIG1-type G domain; it reads KPVKNIVLVG…YTEDMYRNIK (203 aa). Residues 30–38, Ser51, and Asn183 contribute to the GTP site; that span reads GRSVNGICT.

Belongs to the TRAFAC class TrmE-Era-EngA-EngB-Septin-like GTPase superfamily. AIG1/Toc34/Toc159-like paraseptin GTPase family. IAN subfamily. As to expression, mostly expressed in pollen. Also detected in lateral roots and radicles.

The polypeptide is Immune-associated nucleotide-binding protein 2 (Arabidopsis thaliana (Mouse-ear cress)).